A 163-amino-acid chain; its full sequence is Norbelladine synthase (163 aa).

68 to 71 serves as a coordination point for tyramine; that stretch reads YHKE. Lysine 83 functions as the Proton donor in the catalytic mechanism.

Belongs to the BetVI family. As to expression, mostly expressed in bulbs, and, to a lower extent, in roots, stems, leaves and flowers.

The catalysed reaction is 3,4-dihydroxybenzaldehyde + tyramine + AH2 = norbelladine + A + H2O. It participates in alkaloid biosynthesis. Functionally, catalyzes the condensation of tyramine and 3,4-dihydroxybenzaldehyde (3,4-DHBA) to form norbelladine, the common precursor to all Amaryllidaceae alkaloids such as galanthamine, lycorine and haemanthamine, and including haemanthamine- and crinamine-type alkaloids, promising anticancer agents. This chain is Norbelladine synthase, found in Narcissus pseudonarcissus (Daffodil).